Reading from the N-terminus, the 131-residue chain is Holin (131 aa).

2 helical membrane-spanning segments follow: residues 9 to 29 (IYLLGTAAPALLGIVLIWGGL) and 40 to 60 (IIAGVVSILVSGAPAVAAGTV). Positions 74–104 (VDQVTKGVEQVLAARQSAEAEVAKVKQALET) form a coiled coil.

It belongs to the Mycobacterium phage D29 holin family. Homomultimer. Self-associates to form a pore.

The protein localises to the host cell inner membrane. Its function is as follows. Accumulates harmlessly in the cytoplasmic membrane until it reaches a critical concentration that triggers the formation of micron-scale pores (holes) causing host cell membrane disruption and endolysin escape into the periplasmic space. Determines the precise timing of host cell lysis. Participates with the endolysin protein in the sequential events which lead to the programmed host cell lysis releasing the mature viral particles from the host cell. The polypeptide is Holin (11) (Mycobacterium (Mycobacteriophage L5)).